The sequence spans 1140 residues: Kinesin-like protein KIN-14O (1140 aa).

Residues 1–12 (MLESEFQREHAF) show a composition bias toward basic and acidic residues. 4 disordered regions span residues 1–37 (MLES…ADDD), 50–81 (NPAE…DEDS), 161–217 (SPGS…GGHK), and 323–347 (ASGT…KEED). The span at 161 to 179 (SPGSSHGGSTPRSPFSPSS) shows a compositional bias: low complexity. Residues 180 to 193 (PRERHNKGLADSRF) show a composition bias toward basic and acidic residues. The span at 197–209 (LPNSSALDPSSPG) shows a compositional bias: polar residues. Positions 327 to 546 (SEENETEKSK…KAKEMEEKSE (220 aa)) form a coiled coil. Over residues 332 to 347 (TEKSKLEEKKKDKEED) the composition is skewed to basic and acidic residues. In terms of domain architecture, Kinesin motor spans 632-952 (NIRVYCRVRP…LKFAERVSGV (321 aa)). 716 to 723 (GQTGSGKT) is an ATP binding site. Residues 1002–1018 (LGQSDDFNSEAGDSQLS) are compositionally biased toward polar residues. Disordered regions lie at residues 1002–1021 (LGQS…SIED) and 1028–1140 (DYTR…KRWS). The segment covering 1066 to 1078 (EGRKPLKISDKPK) has biased composition (basic and acidic residues). Residues 1099 to 1130 (TMRTTNIAKATSALLSPSSQGMKKTGSASNFL) show a composition bias toward polar residues.

Belongs to the TRAFAC class myosin-kinesin ATPase superfamily. Kinesin family. KIN-14 subfamily.

The polypeptide is Kinesin-like protein KIN-14O (Arabidopsis thaliana (Mouse-ear cress)).